The chain runs to 422 residues: G-protein coupled receptor 83 (422 aa).

The signal sequence occupies residues 1–16; the sequence is MGRRGALLCLLPLLRA. Topologically, residues 17–70 are extracellular; the sequence is AERPEGRADEPGLEAALAGPNASHFFWSNYSFSDWQNFVGRRRYGAESQNPTVK. Residues Asn37 and Asn45 are each glycosylated (N-linked (GlcNAc...) asparagine). Residues 71–91 traverse the membrane as a helical segment; it reads ALLVVAYSFIIVFSLFGNVLV. At 92–106 the chain is on the cytoplasmic side; that stretch reads CHVIFKNQRMRSATS. The chain crosses the membrane as a helical span at residues 107–128; the sequence is LFIVNLAVADILITLLNTPFTL. At 129–144 the chain is on the extracellular side; that stretch reads VRFVNSTWVFGKGMCH. Residue Asn133 is glycosylated (N-linked (GlcNAc...) asparagine). Residues 145–166 traverse the membrane as a helical segment; the sequence is VSRFAQYCSLHVSALTLTAIAV. Residues 167–185 are Cytoplasmic-facing; that stretch reads DRHQVIMHPLKPRISITKG. The chain crosses the membrane as a helical span at residues 186–207; it reads VIYITVIWTMATFFSLPHAICQ. The Extracellular segment spans residues 208–237; that stretch reads KLFTFKYSEDIVRSLCLPDFPEPADLFWKY. The chain crosses the membrane as a helical span at residues 238 to 259; it reads LDLATFILLYILPLLIISVAYA. Residues 260 to 292 are Cytoplasmic-facing; the sequence is RVAKKLWLCNTIGDVTTEQYLALRRKKKKTIKM. Residues 293-314 traverse the membrane as a helical segment; it reads LMLVVVLFALCWFPLNCYVLLL. Topologically, residues 315 to 326 are extracellular; that stretch reads SSKVIHTNNALY. The helical transmembrane segment at 327–347 threads the bilayer; the sequence is FAFHWFAMSSTCYNPFIYCWL. Topologically, residues 348–422 are cytoplasmic; that stretch reads NENFRIELKA…SSVEPIVAMS (75 aa).

The protein belongs to the G-protein coupled receptor 1 family.

It localises to the cell membrane. Functionally, G-protein coupled receptor for PEN, a neuropeptide produced from the precursor protein, proSAAS (encoded by PCSK1N). Acts through a G(i)- and G(q)-alpha-alpha-mediated pathway in response to PEN. Plays a role in food intake and body weight regulation. May contribute to the regulation of anxiety-related behaviors. The chain is G-protein coupled receptor 83 (GPR83) from Canis lupus familiaris (Dog).